The sequence spans 670 residues: Probable Na(+)/H(+) antiporter nhx-3 (670 aa).

Transmembrane regions (helical) follow at residues 41–61, 73–93, 97–117, 129–149, 164–184, 192–212, 235–255, and 268–288; these read VYVI…FNLM, LLII…LSGV, SHAF…YFMP, LVFS…SLLI, EILV…IAIF, FLFI…VVLY, GLSF…FAIA, and ILAP…AEMV. Residue N310 is glycosylated (N-linked (GlcNAc...) asparagine). A run of 4 helical transmembrane segments spans residues 325 to 345, 351 to 371, 390 to 410, and 418 to 438; these read MLAQ…TLTS, FIFI…GIIV, FILS…VSIP, and MFIT…GITI. The disordered stretch occupies residues 648 to 670; that stretch reads GDLKGHCGTSRKPKHSMFELRHV.

The protein belongs to the monovalent cation:proton antiporter 1 (CPA1) transporter (TC 2.A.36) family. Post-translationally, phosphorylated. Expressed in hypodermal cells of the main body syncytium, ut1 cells of the vulva and the spermathecal junction cell.

The protein localises to the endomembrane system. Its function is as follows. Plays a role in epithelial membrane transport processes. The protein is Probable Na(+)/H(+) antiporter nhx-3 (nhx-3) of Caenorhabditis elegans.